The primary structure comprises 957 residues: Histone-lysine N-methyltransferase, H3 lysine-9 specific SUVH3 (957 aa).

The YDG domain occupies 73–243; that stretch reads GHPPGVALGD…PQVCKFLMHG (171 aa). The tract at residues 182–209 is disordered; it reads EAGGGEGGGGGEGGGGAKKGKGGKGGGK. Residues 183 to 198 are compositionally biased toward gly residues; that stretch reads AGGGEGGGGGEGGGGA. The Pre-SET domain occupies 319 to 441; that stretch reads DVSGGQEAVP…HECGDGCSAK (123 aa). The SET domain occupies 455–920; sequence LPLEVFMTES…QLEELSYNYG (466 aa). Disordered stretches follow at residues 552-595, 611-647, and 783-805; these read DAAR…GGAE, AAGT…SSGA, and PPAL…GGGG. Residues 560–578 are compositionally biased toward low complexity; the sequence is QQPQQQQPQQQQQQPAAGG. A compositionally biased stretch (gly residues) spans 793-805; that stretch reads GNGGTTGSGGGGG. In terms of domain architecture, Post-SET spans 941-957; it reads FVMQCNCGAVGCIGNLM.

Belongs to the class V-like SAM-binding methyltransferase superfamily. Histone-lysine methyltransferase family. Suvar3-9 subfamily.

It is found in the nucleus. It localises to the chromosome. The enzyme catalyses L-lysyl(9)-[histone H3] + S-adenosyl-L-methionine = N(6)-methyl-L-lysyl(9)-[histone H3] + S-adenosyl-L-homocysteine + H(+). Its function is as follows. Histone methyltransferase. Monomethylates specifically 'Lys-9' of histone H3. H3 'Lys-9Me1' (H3K9me1) functions as an epigenetic mark of repressed chromatin. This chain is Histone-lysine N-methyltransferase, H3 lysine-9 specific SUVH3 (SUVH3), found in Chlamydomonas reinhardtii (Chlamydomonas smithii).